Here is a 160-residue protein sequence, read N- to C-terminus: MAAKKLTHLDEKGAARMVDVSSKPVTSRSATAKGRVTMQPATLKLIAEDGLKKGNALEVARLAGIMAAKRTADLIPLCHPLAITKVEVDLKMDKKAGTVEVEATVKVAGQTGVEMEALTAVSVTCLTLYDMAKAVDRGMTIGDIRLTRKTGGKSGDYKAK.

Substrate contacts are provided by residues 77–79 and 115–116; these read LCH and ME. Aspartate 130 is a catalytic residue.

This sequence belongs to the MoaC family. As to quaternary structure, homohexamer; trimer of dimers.

It carries out the reaction (8S)-3',8-cyclo-7,8-dihydroguanosine 5'-triphosphate = cyclic pyranopterin phosphate + diphosphate. It participates in cofactor biosynthesis; molybdopterin biosynthesis. In terms of biological role, catalyzes the conversion of (8S)-3',8-cyclo-7,8-dihydroguanosine 5'-triphosphate to cyclic pyranopterin monophosphate (cPMP). In Parvibaculum lavamentivorans (strain DS-1 / DSM 13023 / NCIMB 13966), this protein is Cyclic pyranopterin monophosphate synthase.